The following is a 155-amino-acid chain: 2-C-methyl-D-erythritol 2,4-cyclodiphosphate synthase (155 aa).

A divalent metal cation-binding residues include Asp8 and His10. 4-CDP-2-C-methyl-D-erythritol 2-phosphate-binding positions include 8-10 (DVH) and 34-35 (HS). Residue His42 coordinates a divalent metal cation. Residues 56–58 (DIG), 61–65 (FPDSD), 100–106 (AQKPKML), 132–135 (TTEE), Phe139, and Lys142 each bind 4-CDP-2-C-methyl-D-erythritol 2-phosphate.

It belongs to the IspF family. In terms of assembly, homotrimer. A divalent metal cation serves as cofactor.

The enzyme catalyses 4-CDP-2-C-methyl-D-erythritol 2-phosphate = 2-C-methyl-D-erythritol 2,4-cyclic diphosphate + CMP. It participates in isoprenoid biosynthesis; isopentenyl diphosphate biosynthesis via DXP pathway; isopentenyl diphosphate from 1-deoxy-D-xylulose 5-phosphate: step 4/6. In terms of biological role, involved in the biosynthesis of isopentenyl diphosphate (IPP) and dimethylallyl diphosphate (DMAPP), two major building blocks of isoprenoid compounds. Catalyzes the conversion of 4-diphosphocytidyl-2-C-methyl-D-erythritol 2-phosphate (CDP-ME2P) to 2-C-methyl-D-erythritol 2,4-cyclodiphosphate (ME-CPP) with a corresponding release of cytidine 5-monophosphate (CMP). The sequence is that of 2-C-methyl-D-erythritol 2,4-cyclodiphosphate synthase from Clostridium botulinum (strain 657 / Type Ba4).